The sequence spans 328 residues: Dihydroorotate dehydrogenase (quinone), mitochondrial (328 aa).

Residues 21-38 traverse the membrane as a helical segment; sequence AHGLSIAGLKTGLVTGSA. Residues 61 to 65 and T85 contribute to the FMN site; that span reads AGYDK. K65 is a binding site for substrate. Substrate is bound at residue 110–114; it reads NRLGF. The FMN site is built by N139 and N170. 170–175 provides a ligand contact to substrate; it reads NISSPN. Catalysis depends on S173, which acts as the Nucleophile. FMN contacts are provided by K215 and S243. 244-245 is a binding site for substrate; sequence NT. Residues G266 and G295 each contribute to the FMN site.

This sequence belongs to the dihydroorotate dehydrogenase family. Type 2 subfamily. It depends on FMN as a cofactor.

It is found in the mitochondrion inner membrane. The enzyme catalyses (S)-dihydroorotate + a quinone = orotate + a quinol. The protein operates within pyrimidine metabolism; UMP biosynthesis via de novo pathway; orotate from (S)-dihydroorotate (quinone route): step 1/1. Its function is as follows. Catalyzes the conversion of dihydroorotate to orotate with quinone as electron acceptor. The chain is Dihydroorotate dehydrogenase (quinone), mitochondrial (URA1) from Cyclocybe aegerita (Black poplar mushroom).